Consider the following 249-residue polypeptide: Proteasome subunit alpha 2 (249 aa).

Position 1 is an N-acetylmethionine (Met1).

This sequence belongs to the peptidase T1A family. In terms of assembly, the 20S proteasome core is composed of 14 alpha and 14 beta subunits that assemble into four stacked heptameric rings, resulting in a barrel-shaped structure. The two inner rings, each composed of seven catalytic beta subunits, are sandwiched by two outer rings, each composed of seven alpha subunits. H.volcanii produces at least 2 types of 20S proteasomes: an alpha1-beta proteasome and a proteasome containing all three subunits (alpha1, alpha2, and beta) that appears to be asymmetrical with homo-oligomeric alpha1 and alpha2 rings positioned on separate ends. The catalytic chamber with the active sites is on the inside of the barrel. Has probably a gated structure, the ends of the cylinder being occluded by the N-termini of the alpha-subunits. Is likely capped at one or both ends by the proteasome regulatory ATPase, PAN.

It localises to the cytoplasm. Its activity is regulated as follows. The formation of the proteasomal ATPase PAN-20S proteasome complex, via the docking of the C-termini of PAN into the intersubunit pockets in the alpha-rings, triggers opening of the gate for substrate entry. Interconversion between the open-gate and close-gate conformations leads to a dynamic regulation of the 20S proteasome proteolysis activity. Its function is as follows. Component of the proteasome core, a large protease complex with broad specificity involved in protein degradation. The H.volcanii alpha1-beta-alpha2 proteasome is able to cleave oligopeptides after Tyr and thus displays chymotrypsin-like activity. The sequence is that of Proteasome subunit alpha 2 from Haloferax volcanii (strain ATCC 29605 / DSM 3757 / JCM 8879 / NBRC 14742 / NCIMB 2012 / VKM B-1768 / DS2) (Halobacterium volcanii).